Reading from the N-terminus, the 627-residue chain is tRNA uridine 5-carboxymethylaminomethyl modification enzyme MnmG (627 aa).

FAD is bound by residues 13-18 (GGGHAG), Val125, and Ser180. Residue 274–288 (GPRYCPSIEDKVVRF) coordinates NAD(+). FAD is bound at residue Gln371.

The protein belongs to the MnmG family. Homodimer. Heterotetramer of two MnmE and two MnmG subunits. The cofactor is FAD.

The protein localises to the cytoplasm. In terms of biological role, NAD-binding protein involved in the addition of a carboxymethylaminomethyl (cmnm) group at the wobble position (U34) of certain tRNAs, forming tRNA-cmnm(5)s(2)U34. This Francisella tularensis subsp. tularensis (strain FSC 198) protein is tRNA uridine 5-carboxymethylaminomethyl modification enzyme MnmG.